Consider the following 381-residue polypeptide: uncharacterized protein (381 aa).

Positions histidine 176–asparagine 292 are disordered. The segment covering alanine 177–asparagine 186 has biased composition (basic residues). The segment covering glutamine 187–glutamate 212 has biased composition (basic and acidic residues). The segment covering aspartate 276–valine 286 has biased composition (acidic residues).

This is an uncharacterized protein from Caenorhabditis elegans.